We begin with the raw amino-acid sequence, 299 residues long: Bifunctional protein FolD 2 (299 aa).

This sequence belongs to the tetrahydrofolate dehydrogenase/cyclohydrolase family. Homodimer.

The enzyme catalyses (6R)-5,10-methylene-5,6,7,8-tetrahydrofolate + NADP(+) = (6R)-5,10-methenyltetrahydrofolate + NADPH. It carries out the reaction (6R)-5,10-methenyltetrahydrofolate + H2O = (6R)-10-formyltetrahydrofolate + H(+). It participates in one-carbon metabolism; tetrahydrofolate interconversion. Functionally, catalyzes the oxidation of 5,10-methylenetetrahydrofolate to 5,10-methenyltetrahydrofolate and then the hydrolysis of 5,10-methenyltetrahydrofolate to 10-formyltetrahydrofolate. The protein is Bifunctional protein FolD 2 (FOLD2) of Arabidopsis thaliana (Mouse-ear cress).